Consider the following 190-residue polypeptide: dCTP deaminase (190 aa).

Residue 113–118 (KSTYAR) coordinates dCTP. Glu-139 (proton donor/acceptor) is an active-site residue. Residues Gln-158, Tyr-172, Lys-181, and Gln-182 each contribute to the dCTP site.

The protein belongs to the dCTP deaminase family. Homotrimer.

It catalyses the reaction dCTP + H2O + H(+) = dUTP + NH4(+). It participates in pyrimidine metabolism; dUMP biosynthesis; dUMP from dCTP (dUTP route): step 1/2. In terms of biological role, catalyzes the deamination of dCTP to dUTP. This Chlamydia felis (strain Fe/C-56) (Chlamydophila felis) protein is dCTP deaminase.